The following is an 871-amino-acid chain: Probable LRR receptor-like serine/threonine-protein kinase At1g51810 (871 aa).

An N-terminal signal peptide occupies residues 1-20 (MERHCLFFVIFSLILHLVQA). Residues 21–512 (QDPIGFINLD…GRQIKSMTIP (492 aa)) lie on the Extracellular side of the membrane. N-linked (GlcNAc...) asparagine glycans are attached at residues asparagine 93, asparagine 179, asparagine 229, asparagine 283, asparagine 295, asparagine 396, asparagine 410, asparagine 439, asparagine 458, asparagine 463, and asparagine 489. 3 LRR repeats span residues 405–426 (IITS…TIQN), 429–449 (NLQE…EFLA), and 453–474 (SLLV…KLIE). The chain crosses the membrane as a helical span at residues 513–533 (IVASIGSVVAFTVALMIFCVV). Topologically, residues 534 to 871 (RKNNPSNDEA…FGTEVAPMAR (338 aa)) are cytoplasmic. At threonine 568 the chain carries Phosphothreonine. The region spanning 577 to 850 (NNFQKILGKG…QVVFELKECL (274 aa)) is the Protein kinase domain. ATP is bound by residues 583-591 (LGKGGFGIV) and lysine 605. Tyrosine 650 carries the phosphotyrosine modification. The Proton acceptor role is filled by aspartate 702. Serine 736 carries the post-translational modification Phosphoserine. Residues threonine 737 and threonine 742 each carry the phosphothreonine modification. Tyrosine 750 is modified (phosphotyrosine).

This sequence belongs to the protein kinase superfamily. Ser/Thr protein kinase family.

The protein localises to the membrane. The catalysed reaction is L-seryl-[protein] + ATP = O-phospho-L-seryl-[protein] + ADP + H(+). The enzyme catalyses L-threonyl-[protein] + ATP = O-phospho-L-threonyl-[protein] + ADP + H(+). The protein is Probable LRR receptor-like serine/threonine-protein kinase At1g51810 of Arabidopsis thaliana (Mouse-ear cress).